A 387-amino-acid polypeptide reads, in one-letter code: Thermostable celloxylanase (387 aa).

The GH10 domain maps to alanine 41–proline 382. Glutamate 185 (proton donor) is an active-site residue. Glutamate 293 acts as the Nucleophile in catalysis.

It belongs to the glycosyl hydrolase 10 (cellulase F) family.

The enzyme catalyses Endohydrolysis of (1-&gt;4)-beta-D-glucosidic linkages in cellulose, lichenin and cereal beta-D-glucans.. The catalysed reaction is Endohydrolysis of (1-&gt;4)-beta-D-xylosidic linkages in xylans.. Its pathway is glycan degradation; xylan degradation. In terms of biological role, active toward xylan, carboxymethylcellulose, P-nitrophenyl-beta-D-xylopyranoside and P-nitrophenyl-beta-D-cellobioside. The protein is Thermostable celloxylanase (xynB) of Thermoclostridium stercorarium (Clostridium stercorarium).